The primary structure comprises 402 residues: MSLEGIGFGYRERAPYACDPARSRGRLVPEPESPTRTPFQRDRDRIIHSTAFRRLKHKTQVFIAHEGDHYRTRLTHTIEVAQIARALARALRLDEDLAEAVALVHDFGHTPFGHTGEEALNDRMKAFGGFDHNAQSLRIVTKLEHRYADFDGLNLSWETLEGLVKHNGPLLGAHAAHPDAAVPLPILDFNERYDLELTRFASLEAQCAAIADDIAYNAHDIDDGLRAGLLSLDALDEVPLTKRLLDLVRTRYPDLDPVRTGHELVRRQITIMVEDVIEEAQRRLAAAKPQSVEDVHGQSHALVAFSDTMRTDEKVLKRFLFKNLYFHDSVVVRRHAADKILQDLFDTCFANPSIMPSEWQSGCETLDEAARARRVADYLAGMTDNYAVREHRRLFDHTPDLA.

Positions 73-217 (RLTHTIEVAQ…AAIADDIAYN (145 aa)) constitute an HD domain.

Belongs to the dGTPase family. Type 2 subfamily.

The chain is Deoxyguanosinetriphosphate triphosphohydrolase-like protein from Brucella anthropi (strain ATCC 49188 / DSM 6882 / CCUG 24695 / JCM 21032 / LMG 3331 / NBRC 15819 / NCTC 12168 / Alc 37) (Ochrobactrum anthropi).